Here is a 102-residue protein sequence, read N- to C-terminus: Large ribosomal subunit protein bL21 (102 aa).

It belongs to the bacterial ribosomal protein bL21 family. Part of the 50S ribosomal subunit. Contacts protein L20.

This protein binds to 23S rRNA in the presence of protein L20. The chain is Large ribosomal subunit protein bL21 from Lactiplantibacillus plantarum (strain ATCC BAA-793 / NCIMB 8826 / WCFS1) (Lactobacillus plantarum).